A 528-amino-acid polypeptide reads, in one-letter code: UDP-glucuronosyltransferase 2B10 (528 aa).

A signal peptide spans Met-1–Gly-23. The N-linked (GlcNAc...) asparagine glycan is linked to Asn-66. Residue Lys-134 is modified to N6-succinyllysine. N-linked (GlcNAc...) asparagine glycosylation is found at Asn-314 and Asn-481. The helical transmembrane segment at Val-492–Leu-512 threads the bilayer.

This sequence belongs to the UDP-glycosyltransferase family.

The protein resides in the microsome membrane. It localises to the endoplasmic reticulum membrane. It catalyses the reaction glucuronate acceptor + UDP-alpha-D-glucuronate = acceptor beta-D-glucuronoside + UDP + H(+). Functionally, UDPGT is of major importance in the conjugation and subsequent elimination of potentially toxic xenobiotics and endogenous compounds. The sequence is that of UDP-glucuronosyltransferase 2B10 (UGT2B10) from Homo sapiens (Human).